The sequence spans 180 residues: GTP cyclohydrolase 1 (180 aa).

Residues Cys71, His74, and Cys142 each contribute to the Zn(2+) site.

Belongs to the GTP cyclohydrolase I family. As to quaternary structure, toroid-shaped homodecamer, composed of two pentamers of five dimers.

The catalysed reaction is GTP + H2O = 7,8-dihydroneopterin 3'-triphosphate + formate + H(+). The protein operates within cofactor biosynthesis; 7,8-dihydroneopterin triphosphate biosynthesis; 7,8-dihydroneopterin triphosphate from GTP: step 1/1. In Helicobacter pylori (strain HPAG1), this protein is GTP cyclohydrolase 1.